A 132-amino-acid polypeptide reads, in one-letter code: Small ribosomal subunit protein uS11 (132 aa).

Belongs to the universal ribosomal protein uS11 family. Part of the 30S ribosomal subunit. Interacts with proteins S7 and S18. Binds to IF-3.

Located on the platform of the 30S subunit, it bridges several disparate RNA helices of the 16S rRNA. Forms part of the Shine-Dalgarno cleft in the 70S ribosome. The chain is Small ribosomal subunit protein uS11 from Lachnoclostridium phytofermentans (strain ATCC 700394 / DSM 18823 / ISDg) (Clostridium phytofermentans).